A 588-amino-acid chain; its full sequence is Urease subunit alpha (588 aa).

Positions 149–588 (GGIDTHIHFI…LPMAQRYFLF (440 aa)) constitute a Urease domain. Ni(2+) is bound by residues histidine 154, histidine 156, and lysine 237. The residue at position 237 (lysine 237) is an N6-carboxylysine. Histidine 239 lines the substrate pocket. The Ni(2+) site is built by histidine 266 and histidine 292. Histidine 340 serves as the catalytic Proton donor. Aspartate 380 is a Ni(2+) binding site.

This sequence belongs to the metallo-dependent hydrolases superfamily. Urease alpha subunit family. As to quaternary structure, heterotrimer of UreA (gamma), UreB (beta) and UreC (alpha) subunits. Three heterotrimers associate to form the active enzyme. It depends on Ni cation as a cofactor. Post-translationally, carboxylation allows a single lysine to coordinate two nickel ions.

It is found in the cytoplasm. The catalysed reaction is urea + 2 H2O + H(+) = hydrogencarbonate + 2 NH4(+). Its pathway is nitrogen metabolism; urea degradation; CO(2) and NH(3) from urea (urease route): step 1/1. This is Urease subunit alpha from Opitutus terrae (strain DSM 11246 / JCM 15787 / PB90-1).